A 188-amino-acid polypeptide reads, in one-letter code: MSYLVVTIKVILITGMPGSGKSEFAKLLKERGAKVIVMSEVVRKRYSIEAKPGERLMDFAKRLREIYGDGVVARLCVEELGTSNHDLVVFDGVRSLAEVEEFKRLLGDSVYIVAVHSPPKIRYKRMIERLRSDDSKEISELIRRDREELKLGIGEVIAMADYIITNDSNYEEFKRRCEEVTDRVLKNG.

15–22 (GMPGSGKS) is a binding site for ATP.

It belongs to the UPF0200 family.

This Saccharolobus islandicus (strain Y.G.57.14 / Yellowstone #1) (Sulfolobus islandicus) protein is UPF0200 protein YG5714_1176.